The following is a 389-amino-acid chain: Na(+)/H(+) antiporter NhaA (389 aa).

A run of 11 helical transmembrane segments spans residues 14–34 (AGGI…NSPL), 59–79 (LLLW…GLEV), 95–115 (SLPS…YLLF), 124–144 (AGWA…MALL), 154–174 (VFLL…IALF), 177–197 (SDLS…LVGL), 213–233 (LILW…GVII), 261–281 (FLIL…NMSL), 290–310 (IGIA…FSFI), 328–348 (IAPV…IASL), and 363–383 (LGTL…LSKV).

The protein belongs to the NhaA Na(+)/H(+) (TC 2.A.33) antiporter family.

It is found in the cell inner membrane. It catalyses the reaction Na(+)(in) + 2 H(+)(out) = Na(+)(out) + 2 H(+)(in). Its function is as follows. Na(+)/H(+) antiporter that extrudes sodium in exchange for external protons. The protein is Na(+)/H(+) antiporter NhaA of Shewanella sp. (strain W3-18-1).